The chain runs to 151 residues: UPF0178 protein VSAL_I0701 (151 aa).

This sequence belongs to the UPF0178 family.

The chain is UPF0178 protein VSAL_I0701 from Aliivibrio salmonicida (strain LFI1238) (Vibrio salmonicida (strain LFI1238)).